We begin with the raw amino-acid sequence, 130 residues long: Small ribosomal subunit protein uS8B (130 aa).

This sequence belongs to the universal ribosomal protein uS8 family. As to quaternary structure, component of the small ribosomal subunit (SSU). Mature yeast ribosomes consist of a small (40S) and a large (60S) subunit. The 40S small subunit contains 1 molecule of ribosomal RNA (18S rRNA) and 33 different proteins (encoded by 57 genes). The large 60S subunit contains 3 rRNA molecules (25S, 5.8S and 5S rRNA) and 46 different proteins (encoded by 81 genes).

Its subcellular location is the cytoplasm. In terms of biological role, component of the ribosome, a large ribonucleoprotein complex responsible for the synthesis of proteins in the cell. The small ribosomal subunit (SSU) binds messenger RNAs (mRNAs) and translates the encoded message by selecting cognate aminoacyl-transfer RNA (tRNA) molecules. The large subunit (LSU) contains the ribosomal catalytic site termed the peptidyl transferase center (PTC), which catalyzes the formation of peptide bonds, thereby polymerizing the amino acids delivered by tRNAs into a polypeptide chain. The nascent polypeptides leave the ribosome through a tunnel in the LSU and interact with protein factors that function in enzymatic processing, targeting, and the membrane insertion of nascent chains at the exit of the ribosomal tunnel. This is Small ribosomal subunit protein uS8B from Saccharomyces cerevisiae (strain ATCC 204508 / S288c) (Baker's yeast).